The primary structure comprises 154 residues: Myoglobin (154 aa).

Residues 2-148 (GLSDGEWQLV…FRNDMAAKYK (147 aa)) enclose the Globin domain. Ser-4 carries the phosphoserine modification. Nitrite is bound at residue His-65. His-65 is an O2 binding site. Thr-68 is subject to Phosphothreonine. Residue His-94 coordinates heme b.

It belongs to the globin family. As to quaternary structure, monomeric.

The protein resides in the cytoplasm. It localises to the sarcoplasm. It catalyses the reaction Fe(III)-heme b-[protein] + nitric oxide + H2O = Fe(II)-heme b-[protein] + nitrite + 2 H(+). The catalysed reaction is H2O2 + AH2 = A + 2 H2O. Its function is as follows. Monomeric heme protein which primary function is to store oxygen and facilitate its diffusion within muscle tissues. Reversibly binds oxygen through a pentacoordinated heme iron and enables its timely and efficient release as needed during periods of heightened demand. Depending on the oxidative conditions of tissues and cells, and in addition to its ability to bind oxygen, it also has a nitrite reductase activity whereby it regulates the production of bioactive nitric oxide. Under stress conditions, like hypoxia and anoxia, it also protects cells against reactive oxygen species thanks to its pseudoperoxidase activity. The polypeptide is Myoglobin (MB) (Ornithorhynchus anatinus (Duckbill platypus)).